Consider the following 295-residue polypeptide: Protein PHR1-LIKE 2 (295 aa).

In terms of domain architecture, HTH myb-type spans 38 to 98 (TDPKPRLRWT…HLQKFRLGRQ (61 aa)). Positions 69–94 (PKTIMRTMGVKGLTLYHLKSHLQKFR) form a DNA-binding region, H-T-H motif. The disordered stretch occupies residues 96 to 138 (GRQAGKESTENSKDASCVGESQDTGSSSTSSMRMAQQEQNEGY). Positions 99–108 (AGKESTENSK) are enriched in basic and acidic residues. Over residues 127 to 138 (MRMAQQEQNEGY) the composition is skewed to polar residues. The stretch at 141–161 (TEALRAQMEVQRRLHDQLEVQ) forms a coiled coil. The LHEQLE motif lies at 154 to 159 (LHDQLE).

This sequence belongs to the MYB-CC family. As to quaternary structure, homo- and heterodimers. Interacts with PHL3, but not with PHR1.

Its subcellular location is the nucleus. Its function is as follows. Transcriptional activator. Acts redundantly with PHR1 as a key component of the central regulatory system controlling transcriptional responses to Pi starvation. Binds in a sequence-specific manner to phosphate starvation-regulated promoters. The chain is Protein PHR1-LIKE 2 from Arabidopsis thaliana (Mouse-ear cress).